The sequence spans 194 residues: Serine/threonine-protein kinase mos (194 aa).

Residues 47-194 form the Protein kinase domain; that stretch reads LCLLNLLGSG…HLDLKPANIF (148 aa). ATP is bound by residues 53 to 61 and Lys74; that span reads LGSGGFGSV. Asp187 acts as the Proton acceptor in catalysis.

Belongs to the protein kinase superfamily. Ser/Thr protein kinase family.

The catalysed reaction is L-seryl-[protein] + ATP = O-phospho-L-seryl-[protein] + ADP + H(+). It catalyses the reaction L-threonyl-[protein] + ATP = O-phospho-L-threonyl-[protein] + ADP + H(+). The chain is Serine/threonine-protein kinase mos (MOS) from Dendroaspis angusticeps (Eastern green mamba).